The chain runs to 35 residues: Augerpeptide hheTx4 (35 aa).

Contains 4 disulfide bonds. As to expression, expressed by the venom duct.

Its subcellular location is the secreted. The sequence is that of Augerpeptide hheTx4 from Hastula hectica (Sea snail).